The primary structure comprises 314 residues: Small ribosomal subunit biogenesis GTPase RsgA (314 aa).

A disordered region spans residues M1 to Q21. Positions S85–F246 constitute a CP-type G domain. Residues N134–D137 and G188–T196 contribute to the GTP site. Zn(2+) is bound by residues C270, C275, H277, and C283.

Belongs to the TRAFAC class YlqF/YawG GTPase family. RsgA subfamily. In terms of assembly, monomer. Associates with 30S ribosomal subunit, binds 16S rRNA. It depends on Zn(2+) as a cofactor.

The protein resides in the cytoplasm. In terms of biological role, one of several proteins that assist in the late maturation steps of the functional core of the 30S ribosomal subunit. Helps release RbfA from mature subunits. May play a role in the assembly of ribosomal proteins into the subunit. Circularly permuted GTPase that catalyzes slow GTP hydrolysis, GTPase activity is stimulated by the 30S ribosomal subunit. The sequence is that of Small ribosomal subunit biogenesis GTPase RsgA from Burkholderia pseudomallei (strain 1710b).